Here is a 440-residue protein sequence, read N- to C-terminus: Thymidine phosphorylase (440 aa).

It belongs to the thymidine/pyrimidine-nucleoside phosphorylase family. In terms of assembly, homodimer.

The enzyme catalyses thymidine + phosphate = 2-deoxy-alpha-D-ribose 1-phosphate + thymine. It functions in the pathway pyrimidine metabolism; dTMP biosynthesis via salvage pathway; dTMP from thymine: step 1/2. Its function is as follows. The enzymes which catalyze the reversible phosphorolysis of pyrimidine nucleosides are involved in the degradation of these compounds and in their utilization as carbon and energy sources, or in the rescue of pyrimidine bases for nucleotide synthesis. The protein is Thymidine phosphorylase of Escherichia coli (strain 55989 / EAEC).